A 122-amino-acid polypeptide reads, in one-letter code: uncharacterized protein (122 aa).

The protein belongs to the phage O protein family.

This is an uncharacterized protein from Escherichia coli O6:H1 (strain CFT073 / ATCC 700928 / UPEC).